A 340-amino-acid polypeptide reads, in one-letter code: uncharacterized protein (340 aa).

The segment at 6-70 (KYEKSSARCW…PQCLTAYRIA (65 aa)) adopts an RING-CH-type zinc-finger fold. Zn(2+)-binding residues include cysteine 14, cysteine 17, cysteine 37, cysteine 39, histidine 44, cysteine 47, cysteine 60, and cysteine 63. The next 3 membrane-spanning stretches (helical) occupy residues 249 to 269 (EFWI…TKIL), 274 to 294 (PILL…GNFT), and 300 to 320 (IIGA…FIAW).

Its subcellular location is the membrane. This is an uncharacterized protein from Schizosaccharomyces pombe (strain 972 / ATCC 24843) (Fission yeast).